Reading from the N-terminus, the 857-residue chain is MPQKTSETPMMQQYNEIKAQYPDAFLFYRIGDFYELFNDDAIKGAQLLELTLTARNKSADDPIPMAGVPHHAVQSYVDILIDHGYKVAICEQMEDPKKAVGMVKRAVIQLVTPGTNVDIKAGAAKSNNYITAVMPHAAGYAFAYADVSTGELKVTDLKSKFALQNELSALATKEIVVPEELTDDDAGMLKQGERLLSVQPDAEPTSEGSYVSQELTDPAEAAVVQMLMAYLLNTQKRSLAHIQKAVAYQPSAYLEMDQDARSNLDILQNSRTGRKGDTLLSLLDSTKTAMGGRLLKQWLDRPLLDIDAISVRQNQVQDLLDHFFERSELQERLTKVYDLERLAGRVAFGTVNGRDLIQLQTSLDQIPAIQDVLGKLDDGSFKALRSKMDPVSDVAGLIRRAIEPEPPISVTDGGLILRGYNQKLDSYRDAMKNSKQWIAELEASERKATGIHTLKIRYNKVFGYFIEVTKSNLDKIPEGRYERKQTLTNAERFITPELKEKETLILEAQESSTALEYDLFQDIRDKVKAQIKRLQALAAQISSLDVLQSFATVAENSHYVRPTMHAGTHDINVKGGRHPVVEHVLGRDSYIPNDVIMNHDTDMLLITGPNMSGKSTYMRQLALIVIMAQAGSFVPADVADLPIFDQIFTRIGAADDLANGESTFMVEMLEANAALSHATASSLILFDEIGRGTATYDGMALAQAIIEFLHDHVHAKTLFSTHYHELTSLSDSLAKLKNVHVGAVEEHGNLVFLHKMMPGPADKSYGIHVAKLAGLPADLLARADTILKQLEADAPNKTAPAPAPQVEEQQLSLFEEPKPTPKNSPILTKLAKFDLMAATPMDAMNFIFDLQKHLKKK.

608–615 is an ATP binding site; sequence GPNMSGKS.

This sequence belongs to the DNA mismatch repair MutS family.

In terms of biological role, this protein is involved in the repair of mismatches in DNA. It is possible that it carries out the mismatch recognition step. This protein has a weak ATPase activity. The sequence is that of DNA mismatch repair protein MutS from Lacticaseibacillus casei (strain BL23) (Lactobacillus casei).